The sequence spans 315 residues: DNA-directed RNA polymerase subunit alpha (315 aa).

The segment at 1 to 228 (MLEIEKPKIE…EHFKLFMTLT (228 aa)) is alpha N-terminal domain (alpha-NTD). The alpha C-terminal domain (alpha-CTD) stretch occupies residues 245–315 (KEKVLEMTIE…LELGLKQSEE (71 aa)).

The protein belongs to the RNA polymerase alpha chain family. As to quaternary structure, homodimer. The RNAP catalytic core consists of 2 alpha, 1 beta, 1 beta' and 1 omega subunit. When a sigma factor is associated with the core the holoenzyme is formed, which can initiate transcription.

The catalysed reaction is RNA(n) + a ribonucleoside 5'-triphosphate = RNA(n+1) + diphosphate. In terms of biological role, DNA-dependent RNA polymerase catalyzes the transcription of DNA into RNA using the four ribonucleoside triphosphates as substrates. This is DNA-directed RNA polymerase subunit alpha from Clostridium tetani (strain Massachusetts / E88).